Here is a 164-residue protein sequence, read N- to C-terminus: Succinate dehydrogenase assembly factor 3, mitochondrial (164 aa).

A mitochondrion-targeting transit peptide spans 1–51 (MRPTLLRLANASGPLPLSVSQASVQLIPPIPLYRRLLRAHRLLPVDMRYMG). Residues 136–145 (KSPEQIEREA) show a composition bias toward basic and acidic residues. The disordered stretch occupies residues 136–164 (KSPEQIEREANSAGVSPVNPNDPTTAGNS). The segment covering 153–164 (VNPNDPTTAGNS) has biased composition (polar residues).

It belongs to the complex I LYR family. SDHAF3 subfamily. In terms of assembly, interacts with the iron-sulfur protein subunit within the SDH catalytic dimer.

It is found in the mitochondrion matrix. Functionally, plays an essential role in the assembly of succinate dehydrogenase (SDH), an enzyme complex (also referred to as respiratory complex II) that is a component of both the tricarboxylic acid (TCA) cycle and the mitochondrial electron transport chain, and which couples the oxidation of succinate to fumarate with the reduction of ubiquinone (coenzyme Q) to ubiquinol. Promotes maturation of the iron-sulfur protein subunit of the SDH catalytic dimer, protecting it from the deleterious effects of oxidants. May act together with SDHAF1. The protein is Succinate dehydrogenase assembly factor 3, mitochondrial of Cryptococcus neoformans var. neoformans serotype D (strain B-3501A) (Filobasidiella neoformans).